The chain runs to 309 residues: Porphobilinogen deaminase (309 aa).

Cys234 bears the S-(dipyrrolylmethanemethyl)cysteine mark.

The protein belongs to the HMBS family. As to quaternary structure, monomer. It depends on dipyrromethane as a cofactor.

The enzyme catalyses 4 porphobilinogen + H2O = hydroxymethylbilane + 4 NH4(+). Its pathway is porphyrin-containing compound metabolism; protoporphyrin-IX biosynthesis; coproporphyrinogen-III from 5-aminolevulinate: step 2/4. Its function is as follows. Tetrapolymerization of the monopyrrole PBG into the hydroxymethylbilane pre-uroporphyrinogen in several discrete steps. This is Porphobilinogen deaminase (hemC) from Mycobacterium bovis (strain ATCC BAA-935 / AF2122/97).